The chain runs to 431 residues: Adenylosuccinate synthetase (431 aa).

GTP is bound by residues 12–18 (GDEGKGK) and 40–42 (GHT). Asp-13 (proton acceptor) is an active-site residue. Asp-13 and Gly-40 together coordinate Mg(2+). IMP contacts are provided by residues 13–16 (DEGK), 38–41 (NAGH), Thr-131, Arg-145, Gln-225, Thr-240, and Arg-304. Catalysis depends on His-41, which acts as the Proton donor. Residue 300 to 306 (TNTGRRR) participates in substrate binding. GTP-binding positions include Arg-306, 332–334 (KLD), and 414–416 (STS).

It belongs to the adenylosuccinate synthetase family. Homodimer. Mg(2+) serves as cofactor.

It localises to the cytoplasm. The enzyme catalyses IMP + L-aspartate + GTP = N(6)-(1,2-dicarboxyethyl)-AMP + GDP + phosphate + 2 H(+). It functions in the pathway purine metabolism; AMP biosynthesis via de novo pathway; AMP from IMP: step 1/2. Functionally, plays an important role in the de novo pathway of purine nucleotide biosynthesis. Catalyzes the first committed step in the biosynthesis of AMP from IMP. The sequence is that of Adenylosuccinate synthetase from Methylocella silvestris (strain DSM 15510 / CIP 108128 / LMG 27833 / NCIMB 13906 / BL2).